Here is a 996-residue protein sequence, read N- to C-terminus: Poly [ADP-ribose] polymerase (996 aa).

A DNA-binding region spans residues 1–369; sequence MEIDLPFKVE…TSTILKNISL (369 aa). 2 PARP-type zinc fingers span residues 7–89 and 114–203; these read FKVE…DNCT and FGIE…PVIK. Zn(2+)-binding residues include cysteine 19, cysteine 22, histidine 51, cysteine 54, cysteine 126, cysteine 129, histidine 161, and cysteine 164. Short sequence motifs (nuclear localization signal) lie at residues 211–214 and 232–235; these read KKAK and KIKK. Residues 220-358 enclose the PADR1 zinc-binding domain; sequence EEDAASIKEL…EVRAIRYIPP (139 aa). A zinc ribbon region spans residues 286 to 329; it reads GALLPCTDCKGRQLLFHKSGYLCNGDLTEWTKCTKLLKEPERKS. Residues cysteine 291, cysteine 294, cysteine 308, and cysteine 318 each contribute to the Zn(2+) site. The interval 370-507 is automodification domain; the sequence is KKGDELDGPK…SIYTKSVPKS (138 aa). In terms of domain architecture, BRCT spans 382–473; sequence RERPPLYNIE…AGAINYISSM (92 aa). Residues 527-625 enclose the WGR domain; it reads VAHVYVSRNK…ENFVKVAGRM (99 aa). In terms of domain architecture, PARP alpha-helical spans 647–764; the sequence is KSKLPLSVQD…EIECAYSLLQ (118 aa). The 224-residue stretch at 773–996 folds into the PARP catalytic domain; sequence NPIDKHYEQL…YMLRMNFKYK (224 aa).

This sequence belongs to the ARTD/PARP family.

It localises to the nucleus. It carries out the reaction NAD(+) + (ADP-D-ribosyl)n-acceptor = nicotinamide + (ADP-D-ribosyl)n+1-acceptor + H(+).. The enzyme catalyses L-aspartyl-[protein] + NAD(+) = 4-O-(ADP-D-ribosyl)-L-aspartyl-[protein] + nicotinamide. The catalysed reaction is L-glutamyl-[protein] + NAD(+) = 5-O-(ADP-D-ribosyl)-L-glutamyl-[protein] + nicotinamide. Its function is as follows. Poly-ADP-ribosyltransferase that mediates poly-ADP-ribosylation of proteins and plays a key role in DNA repair. Mainly mediates glutamate and aspartate ADP-ribosylation of target proteins: the ADP-D-ribosyl group of NAD(+) is transferred to the acceptor carboxyl group of glutamate and aspartate residues and further ADP-ribosyl groups are transferred to the 2'-position of the terminal adenosine moiety, building up a polymer with an average chain length of 20-30 units. This chain is Poly [ADP-ribose] polymerase, found in Sarcophaga peregrina (Flesh fly).